The sequence spans 339 residues: Pre-mRNA-splicing factor syf2 (339 aa).

The interval 1 to 136 (MPPEKKRKTE…LQSDPSQLTA (136 aa)) is disordered. The segment covering 7–16 (RKTEPEDKAE) has biased composition (basic and acidic residues). Polar residues predominate over residues 17 to 37 (VTQQENDVAESTTEPNNQTVT). Over residues 45-93 (VTEAALATTSSSSPPVLSASETAQPDTAATSQSSSTPPTSTSAAESAAA) the composition is skewed to low complexity. The segment covering 94–103 (KARERAERFR) has biased composition (basic and acidic residues). A compositionally biased stretch (polar residues) spans 126-135 (RLQSDPSQLT).

It belongs to the SYF2 family. Associated with the spliceosome.

The protein localises to the nucleus. Involved in pre-mRNA splicing. This Neurospora crassa (strain ATCC 24698 / 74-OR23-1A / CBS 708.71 / DSM 1257 / FGSC 987) protein is Pre-mRNA-splicing factor syf2 (msp-4).